An 89-amino-acid polypeptide reads, in one-letter code: Small ribosomal subunit protein uS15 (89 aa).

Residues 1–18 are compositionally biased toward basic and acidic residues; the sequence is MSLDTAEKQKLIENHQVH. The tract at residues 1 to 23 is disordered; it reads MSLDTAEKQKLIENHQVHPTDTG.

It belongs to the universal ribosomal protein uS15 family. As to quaternary structure, part of the 30S ribosomal subunit. Forms a bridge to the 50S subunit in the 70S ribosome, contacting the 23S rRNA.

In terms of biological role, one of the primary rRNA binding proteins, it binds directly to 16S rRNA where it helps nucleate assembly of the platform of the 30S subunit by binding and bridging several RNA helices of the 16S rRNA. Forms an intersubunit bridge (bridge B4) with the 23S rRNA of the 50S subunit in the ribosome. The protein is Small ribosomal subunit protein uS15 of Prochlorococcus marinus (strain MIT 9301).